We begin with the raw amino-acid sequence, 352 residues long: Anthranilate phosphoribosyltransferase (352 aa).

Residues Gly83, 86 to 87 (GD), Thr91, 93 to 96 (NIST), 111 to 119 (KHGGRSVSS), and Ala123 each bind 5-phospho-alpha-D-ribose 1-diphosphate. Residue Gly83 coordinates anthranilate. Ser95 contributes to the Mg(2+) binding site. An anthranilate-binding site is contributed by Arg169. Asp228 and Glu229 together coordinate Mg(2+).

The protein belongs to the anthranilate phosphoribosyltransferase family. Homodimer. It depends on Mg(2+) as a cofactor.

It carries out the reaction N-(5-phospho-beta-D-ribosyl)anthranilate + diphosphate = 5-phospho-alpha-D-ribose 1-diphosphate + anthranilate. The protein operates within amino-acid biosynthesis; L-tryptophan biosynthesis; L-tryptophan from chorismate: step 2/5. Catalyzes the transfer of the phosphoribosyl group of 5-phosphorylribose-1-pyrophosphate (PRPP) to anthranilate to yield N-(5'-phosphoribosyl)-anthranilate (PRA). The sequence is that of Anthranilate phosphoribosyltransferase from Neisseria meningitidis serogroup A / serotype 4A (strain DSM 15465 / Z2491).